We begin with the raw amino-acid sequence, 248 residues long: 2,3-bisphosphoglycerate-dependent phosphoglycerate mutase (248 aa).

Substrate-binding positions include 8–15, 21–22, arginine 60, 87–90, lysine 98, 114–115, and 183–184; these read RHGESTWN, TG, EKHY, RR, and GN. Histidine 9 (tele-phosphohistidine intermediate) is an active-site residue. Glutamate 87 functions as the Proton donor/acceptor in the catalytic mechanism.

This sequence belongs to the phosphoglycerate mutase family. BPG-dependent PGAM subfamily.

The catalysed reaction is (2R)-2-phosphoglycerate = (2R)-3-phosphoglycerate. The protein operates within carbohydrate degradation; glycolysis; pyruvate from D-glyceraldehyde 3-phosphate: step 3/5. Catalyzes the interconversion of 2-phosphoglycerate and 3-phosphoglycerate. This is 2,3-bisphosphoglycerate-dependent phosphoglycerate mutase from Elusimicrobium minutum (strain Pei191).